Consider the following 124-residue polypeptide: MARGSVILLGWLLLVVTLSATLGLGMPAKEKRGWTLNSAGYLLGPHAIDNHRSFSDKHGLTGKRELQLEVEERRPGSVDVPLPESNIVRTIMEFLSFLHLKEAGALDSLPGIPLATSSEDLEKS.

A signal peptide spans M1–S19. Residues A20 to E30 constitute a propeptide that is removed on maturation. A Threonine amide modification is found at T61. S117 and S118 each carry phosphoserine.

The protein belongs to the galanin family. As to expression, expressed in retinal progenitor cells and retinal ganglion cells (at protein level).

The protein localises to the secreted. Endocrine hormone of the central and peripheral nervous systems that binds and activates the G protein-coupled receptors GALR1, GALR2, and GALR3. This small neuropeptide may regulate diverse physiologic functions including contraction of smooth muscle of the gastrointestinal and genitourinary tract, growth hormone and insulin release and adrenal secretion. This Mus musculus (Mouse) protein is Galanin peptides (Gal).